Consider the following 281-residue polypeptide: CCAAT/enhancer-binding protein epsilon (281 aa).

The segment at 1 to 30 is disordered; that stretch reads MSHGTYYECEPRAGQQPLEFSGARAGPGEL. K121 is covalently cross-linked (Glycyl lysine isopeptide (Lys-Gly) (interchain with G-Cter in SUMO2)). Residue S181 is modified to Phosphoserine. In terms of domain architecture, bZIP spans 204–267; it reads SLEYRLRRER…DTLRNLFRQI (64 aa). Residues 208–228 are basic motif; it reads RLRRERNNIAVRKSRDKAKRR. The segment at 230–237 is leucine-zipper; the sequence is LETQQKVL.

The protein belongs to the bZIP family. C/EBP subfamily. Binds DNA as a homodimer and as a heterodimer. Can form stable heterodimers with CEBPA, CEBPB and CEBPD. Interacts with GATA1 and SPI1. Interacts with SMARCD2. Phosphorylated.

The protein resides in the nucleus. Transcriptional activator. C/EBP are DNA-binding proteins that recognize two different motifs: the CCAAT homology common to many promoters and the enhanced core homology common to many enhancers. Required for the promyelocyte-myelocyte transition in myeloid differentiation. This is CCAAT/enhancer-binding protein epsilon (CEBPE) from Ovis aries (Sheep).